The primary structure comprises 261 residues: Cytochrome c oxidase subunit 3 (261 aa).

Residues 1 to 15 (MAHQAHAYHMVDPSP) lie on the Mitochondrial matrix side of the membrane. A helical membrane pass occupies residues 16–34 (WPLTGAIAALLLTSGTAVW). Over 35-40 (FHFHSL) the chain is Mitochondrial intermembrane. Residues 41 to 66 (TLLTLGNILLLLTMYQWWRDIIREGT) traverse the membrane as a helical segment. At 67–72 (FQGHHT) the chain is on the mitochondrial matrix side. Residues 73-105 (PPVQKGLRYGMILFITSEVFFFLGFFWAFYHAS) traverse the membrane as a helical segment. At 106-128 (LAPTPELGGCWPPAGITTLDPFE) the chain is on the mitochondrial intermembrane side. The helical transmembrane segment at 129 to 152 (VPLLNTAVLLASGVTVTWAHHSIM) threads the bilayer. Residues 153–155 (EGE) lie on the Mitochondrial matrix side of the membrane. A helical transmembrane segment spans residues 156 to 183 (RKQTIQALTLTILLGFYFTFLQGMEYYE). Residues 184-190 (APFTIAD) are Mitochondrial intermembrane-facing. Residues 191-223 (GVYGSTFFVATGFHGLHVIIGSTFLAVCLLRQV) form a helical membrane-spanning segment. Residues 224 to 232 (QYHFTSEHH) lie on the Mitochondrial matrix side of the membrane. Residues 233 to 256 (FGFEAAAWYWHFVDVVWLFLYVSI) traverse the membrane as a helical segment. Over 257 to 261 (YWWGS) the chain is Mitochondrial intermembrane.

This sequence belongs to the cytochrome c oxidase subunit 3 family. In terms of assembly, component of the cytochrome c oxidase (complex IV, CIV), a multisubunit enzyme composed of 14 subunits. The complex is composed of a catalytic core of 3 subunits MT-CO1, MT-CO2 and MT-CO3, encoded in the mitochondrial DNA, and 11 supernumerary subunits COX4I, COX5A, COX5B, COX6A, COX6B, COX6C, COX7A, COX7B, COX7C, COX8 and NDUFA4, which are encoded in the nuclear genome. The complex exists as a monomer or a dimer and forms supercomplexes (SCs) in the inner mitochondrial membrane with NADH-ubiquinone oxidoreductase (complex I, CI) and ubiquinol-cytochrome c oxidoreductase (cytochrome b-c1 complex, complex III, CIII), resulting in different assemblies (supercomplex SCI(1)III(2)IV(1) and megacomplex MCI(2)III(2)IV(2)).

It is found in the mitochondrion inner membrane. It carries out the reaction 4 Fe(II)-[cytochrome c] + O2 + 8 H(+)(in) = 4 Fe(III)-[cytochrome c] + 2 H2O + 4 H(+)(out). Its function is as follows. Component of the cytochrome c oxidase, the last enzyme in the mitochondrial electron transport chain which drives oxidative phosphorylation. The respiratory chain contains 3 multisubunit complexes succinate dehydrogenase (complex II, CII), ubiquinol-cytochrome c oxidoreductase (cytochrome b-c1 complex, complex III, CIII) and cytochrome c oxidase (complex IV, CIV), that cooperate to transfer electrons derived from NADH and succinate to molecular oxygen, creating an electrochemical gradient over the inner membrane that drives transmembrane transport and the ATP synthase. Cytochrome c oxidase is the component of the respiratory chain that catalyzes the reduction of oxygen to water. Electrons originating from reduced cytochrome c in the intermembrane space (IMS) are transferred via the dinuclear copper A center (CU(A)) of subunit 2 and heme A of subunit 1 to the active site in subunit 1, a binuclear center (BNC) formed by heme A3 and copper B (CU(B)). The BNC reduces molecular oxygen to 2 water molecules using 4 electrons from cytochrome c in the IMS and 4 protons from the mitochondrial matrix. The polypeptide is Cytochrome c oxidase subunit 3 (mt-co3) (Oncorhynchus mykiss (Rainbow trout)).